Here is a 345-residue protein sequence, read N- to C-terminus: Heat stress transcription factor A-2 (345 aa).

A compositionally biased stretch (low complexity) spans 17 to 30 (GSVAASSSVGSSSS). Residues 17-40 (GSVAASSSVGSSSSPRPMEGLNET) form a disordered region. A DNA-binding region spans residues 42–136 (PPPFLTKTYE…LLKNIKRRRN (95 aa)). The hydrophobic repeat HR-A/B stretch occupies residues 150-216 (SCVEVGQYGF…QMMTFLAKAL (67 aa)). The Nuclear localization signal signature appears at 231–238 (EKKSLFGL). Positions 273 to 282 (EMLFAAAIDD) match the AHA1 motif. A Glycyl lysine isopeptide (Lys-Gly) (interchain with G-Cter in SUMO) cross-link involves residue Lys315. An AHA2 motif is present at residues 324-333 (LDWDSQDLHD). The Nuclear export signal motif lies at 334-341 (MVDQMGFL).

The protein belongs to the HSF family. Class A subfamily. As to quaternary structure, homotrimer. Interacts with SUMO1. Binds to HSBP. Post-translationally, exhibits temperature-dependent phosphorylation. In terms of processing, sumoylated at Lys-315. Sumoylation represses its function.

It is found in the cytoplasm. The protein localises to the nucleus. In terms of biological role, transcriptional activator that specifically binds DNA sequence 5'-AGAAnnTTCT-3' known as heat shock promoter elements (HSE). Seems to be involved in other environmental stress responses. Activates ascorbate peroxidase 2 (APX2) in addition to several heat shock protein (HSPs). Binds to the promoter of SGIP1 and activates its expression in heat acclimated plants. Involved in the mechanisms necessary for quick response to heat and subsequent heritable transgenerational memory of heat acclimation (global warming) such as early flowering and attenuated immunity; this process includes epigenetic regulation as well as post-transcriptional gene silencing (PTGS). In response to heat, HSFA2 is activated and promotes the expression of REF6 which in turn derepresses HSFA2, thus establishing an inheritable feedback loop able to trigger SGIP1 and subsequent SGIP1-mediated SGS3 degradation; this prevents the biosynthesis of trans-acting siRNA (tasiRNA) and leads to the release of HTT5, which drives early flowering but attenuates immunity. This Arabidopsis thaliana (Mouse-ear cress) protein is Heat stress transcription factor A-2.